A 95-amino-acid polypeptide reads, in one-letter code: Costars family protein WS02710_H03 (95 aa).

The protein belongs to the costars family.

The polypeptide is Costars family protein WS02710_H03 (Picea sitchensis (Sitka spruce)).